The sequence spans 342 residues: S-adenosylmethionine:tRNA ribosyltransferase-isomerase (342 aa).

Belongs to the QueA family. In terms of assembly, monomer.

The protein resides in the cytoplasm. The catalysed reaction is 7-aminomethyl-7-carbaguanosine(34) in tRNA + S-adenosyl-L-methionine = epoxyqueuosine(34) in tRNA + adenine + L-methionine + 2 H(+). It functions in the pathway tRNA modification; tRNA-queuosine biosynthesis. In terms of biological role, transfers and isomerizes the ribose moiety from AdoMet to the 7-aminomethyl group of 7-deazaguanine (preQ1-tRNA) to give epoxyqueuosine (oQ-tRNA). This is S-adenosylmethionine:tRNA ribosyltransferase-isomerase from Geobacillus kaustophilus (strain HTA426).